We begin with the raw amino-acid sequence, 266 residues long: Thiazole synthase (266 aa).

Residue K95 is the Schiff-base intermediate with DXP of the active site. Residues G156, 182–183, and 204–205 contribute to the 1-deoxy-D-xylulose 5-phosphate site; these read AG and NT.

This sequence belongs to the ThiG family. In terms of assembly, homotetramer. Forms heterodimers with either ThiH or ThiS.

It is found in the cytoplasm. It catalyses the reaction [ThiS sulfur-carrier protein]-C-terminal-Gly-aminoethanethioate + 2-iminoacetate + 1-deoxy-D-xylulose 5-phosphate = [ThiS sulfur-carrier protein]-C-terminal Gly-Gly + 2-[(2R,5Z)-2-carboxy-4-methylthiazol-5(2H)-ylidene]ethyl phosphate + 2 H2O + H(+). It participates in cofactor biosynthesis; thiamine diphosphate biosynthesis. Functionally, catalyzes the rearrangement of 1-deoxy-D-xylulose 5-phosphate (DXP) to produce the thiazole phosphate moiety of thiamine. Sulfur is provided by the thiocarboxylate moiety of the carrier protein ThiS. In vitro, sulfur can be provided by H(2)S. The polypeptide is Thiazole synthase (Shewanella denitrificans (strain OS217 / ATCC BAA-1090 / DSM 15013)).